The primary structure comprises 255 residues: Aspartate/glutamate leucyltransferase (255 aa).

Belongs to the R-transferase family. Bpt subfamily.

Its subcellular location is the cytoplasm. It catalyses the reaction N-terminal L-glutamyl-[protein] + L-leucyl-tRNA(Leu) = N-terminal L-leucyl-L-glutamyl-[protein] + tRNA(Leu) + H(+). The catalysed reaction is N-terminal L-aspartyl-[protein] + L-leucyl-tRNA(Leu) = N-terminal L-leucyl-L-aspartyl-[protein] + tRNA(Leu) + H(+). Functions in the N-end rule pathway of protein degradation where it conjugates Leu from its aminoacyl-tRNA to the N-termini of proteins containing an N-terminal aspartate or glutamate. In Leptospira borgpetersenii serovar Hardjo-bovis (strain JB197), this protein is Aspartate/glutamate leucyltransferase.